The primary structure comprises 330 residues: AH receptor-interacting protein (330 aa).

The residue at position 43 (serine 43) is a Phosphoserine. Positions 54–146 constitute a PPIase FKBP-type domain; the sequence is RVRGKPMELI…DLDALQQNPQ (93 aa). TPR repeat units follow at residues 179-212, 231-264, and 265-298; these read VPVIHQEGNRLYREGHVKEAAAKYYDAIACLKNL, TPLLLNYCQCKLVAEEYYEVLDHCSSILNKYDDN, and VKAYFKRGKAHAAVWNAQQAQDDFAKVLQLDPAM.

In terms of assembly, interacts with RET in the pituitary gland; this interaction prevents the formation of the AIP-survivin complex.

It is found in the cytoplasm. In terms of biological role, may play a positive role in AHR-mediated (aromatic hydrocarbon receptor) signaling, possibly by influencing its receptivity for ligand and/or its nuclear targeting. This Bos taurus (Bovine) protein is AH receptor-interacting protein (AIP).